Here is a 273-residue protein sequence, read N- to C-terminus: 6-carboxyhexanoate--CoA ligase (273 aa).

It belongs to the BioW family. Homodimer. Mg(2+) serves as cofactor.

The enzyme catalyses heptanedioate + ATP + CoA = 6-carboxyhexanoyl-CoA + AMP + diphosphate. Its pathway is metabolic intermediate metabolism; pimeloyl-CoA biosynthesis; pimeloyl-CoA from pimelate: step 1/1. In terms of biological role, catalyzes the transformation of pimelate into pimeloyl-CoA with concomitant hydrolysis of ATP to AMP. This chain is 6-carboxyhexanoate--CoA ligase, found in Alkalihalophilus pseudofirmus (strain ATCC BAA-2126 / JCM 17055 / OF4) (Bacillus pseudofirmus).